Reading from the N-terminus, the 617-residue chain is Dihydroxy-acid dehydratase (617 aa).

Aspartate 81 serves as a coordination point for Mg(2+). Cysteine 122 provides a ligand contact to [2Fe-2S] cluster. 2 residues coordinate Mg(2+): aspartate 123 and lysine 124. Lysine 124 is subject to N6-carboxylysine. Cysteine 197 serves as a coordination point for [2Fe-2S] cluster. Glutamate 494 is a Mg(2+) binding site. Serine 520 acts as the Proton acceptor in catalysis.

The protein belongs to the IlvD/Edd family. Homodimer. It depends on [2Fe-2S] cluster as a cofactor. Mg(2+) serves as cofactor.

It catalyses the reaction (2R)-2,3-dihydroxy-3-methylbutanoate = 3-methyl-2-oxobutanoate + H2O. The enzyme catalyses (2R,3R)-2,3-dihydroxy-3-methylpentanoate = (S)-3-methyl-2-oxopentanoate + H2O. It participates in amino-acid biosynthesis; L-isoleucine biosynthesis; L-isoleucine from 2-oxobutanoate: step 3/4. It functions in the pathway amino-acid biosynthesis; L-valine biosynthesis; L-valine from pyruvate: step 3/4. Functionally, functions in the biosynthesis of branched-chain amino acids. Catalyzes the dehydration of (2R,3R)-2,3-dihydroxy-3-methylpentanoate (2,3-dihydroxy-3-methylvalerate) into 2-oxo-3-methylpentanoate (2-oxo-3-methylvalerate) and of (2R)-2,3-dihydroxy-3-methylbutanoate (2,3-dihydroxyisovalerate) into 2-oxo-3-methylbutanoate (2-oxoisovalerate), the penultimate precursor to L-isoleucine and L-valine, respectively. The chain is Dihydroxy-acid dehydratase from Frankia casuarinae (strain DSM 45818 / CECT 9043 / HFP020203 / CcI3).